The sequence spans 202 residues: GTP cyclohydrolase-2 (202 aa).

GTP is bound at residue 48 to 52 (RLHSE). The Zn(2+) site is built by Cys53, Cys64, and Cys66. GTP contacts are provided by residues Gln69, 91 to 93 (EGR), and Thr113. Asp125 (proton acceptor) is an active-site residue. The Nucleophile role is filled by Arg127. 2 residues coordinate GTP: Thr148 and Lys153.

This sequence belongs to the GTP cyclohydrolase II family. The cofactor is Zn(2+).

It catalyses the reaction GTP + 4 H2O = 2,5-diamino-6-hydroxy-4-(5-phosphoribosylamino)-pyrimidine + formate + 2 phosphate + 3 H(+). It participates in cofactor biosynthesis; riboflavin biosynthesis; 5-amino-6-(D-ribitylamino)uracil from GTP: step 1/4. Catalyzes the conversion of GTP to 2,5-diamino-6-ribosylamino-4(3H)-pyrimidinone 5'-phosphate (DARP), formate and pyrophosphate. This chain is GTP cyclohydrolase-2, found in Colwellia psychrerythraea (strain 34H / ATCC BAA-681) (Vibrio psychroerythus).